The following is a 65-amino-acid chain: DNA-directed RNA polymerase subunit Rpo10 (65 aa).

Zn(2+) contacts are provided by C7, C10, C44, and C45.

The protein belongs to the archaeal Rpo10/eukaryotic RPB10 RNA polymerase subunit family. Part of the RNA polymerase complex. Requires Zn(2+) as cofactor.

It localises to the cytoplasm. Its subcellular location is the chromosome. The catalysed reaction is RNA(n) + a ribonucleoside 5'-triphosphate = RNA(n+1) + diphosphate. In terms of biological role, DNA-dependent RNA polymerase (RNAP) catalyzes the transcription of DNA into RNA using the four ribonucleoside triphosphates as substrates. This chain is DNA-directed RNA polymerase subunit Rpo10, found in Thermococcus kodakarensis (strain ATCC BAA-918 / JCM 12380 / KOD1) (Pyrococcus kodakaraensis (strain KOD1)).